A 124-amino-acid chain; its full sequence is Large ribosomal subunit protein eL31 (124 aa).

The protein belongs to the eukaryotic ribosomal protein eL31 family.

The protein is Large ribosomal subunit protein eL31 (RpL31) of Aedes aegypti (Yellowfever mosquito).